We begin with the raw amino-acid sequence, 288 residues long: Sulfur carrier protein FdhD (288 aa).

Catalysis depends on Cys122, which acts as the Cysteine persulfide intermediate. 268-273 (FVRGER) contacts Mo-bis(molybdopterin guanine dinucleotide).

It belongs to the FdhD family.

Its subcellular location is the cytoplasm. Its function is as follows. Required for formate dehydrogenase (FDH) activity. Acts as a sulfur carrier protein that transfers sulfur from IscS to the molybdenum cofactor prior to its insertion into FDH. In Anaeromyxobacter dehalogenans (strain 2CP-1 / ATCC BAA-258), this protein is Sulfur carrier protein FdhD.